A 152-amino-acid polypeptide reads, in one-letter code: Small ribosomal subunit protein uS17A (152 aa).

This sequence belongs to the universal ribosomal protein uS17 family. Component of the small ribosomal subunit (SSU). Mature yeast ribosomes consist of a small (40S) and a large (60S) subunit. The 40S small subunit contains 1 molecule of ribosomal RNA (18S rRNA) and at least 33 different proteins. The large 60S subunit contains 3 rRNA molecules (25S, 5.8S and 5S rRNA) and at least 46 different proteins.

It localises to the cytoplasm. The protein localises to the nucleus. Component of the ribosome, a large ribonucleoprotein complex responsible for the synthesis of proteins in the cell. The small ribosomal subunit (SSU) binds messenger RNAs (mRNAs) and translates the encoded message by selecting cognate aminoacyl-transfer RNA (tRNA) molecules. The large subunit (LSU) contains the ribosomal catalytic site termed the peptidyl transferase center (PTC), which catalyzes the formation of peptide bonds, thereby polymerizing the amino acids delivered by tRNAs into a polypeptide chain. The nascent polypeptides leave the ribosome through a tunnel in the LSU and interact with protein factors that function in enzymatic processing, targeting, and the membrane insertion of nascent chains at the exit of the ribosomal tunnel. This Schizosaccharomyces pombe (strain 972 / ATCC 24843) (Fission yeast) protein is Small ribosomal subunit protein uS17A (rps1101).